The sequence spans 325 residues: Small ribosomal subunit protein RACK1 (325 aa).

WD repeat units follow at residues 5–48 (QMKL…WDVD), 58–99 (IGRP…WDLN), 100–141 (QGVS…WNTL), 143–186 (QCKY…WNLG), 187–227 (NCRL…LWDL), 228–268 (NEGK…WDLE), and 269–320 (DKKE…YQVS).

It belongs to the WD repeat G protein beta family. Ribosomal protein RACK1 subfamily.

Functionally, required for the expression of antimicrobial peptide nlp-29 in response to fungal infection or physical injury. The protein is Small ribosomal subunit protein RACK1 (rack-1) of Caenorhabditis elegans.